The chain runs to 289 residues: Shikimate dehydrogenase (NADP(+)) (289 aa).

Residues 20 to 22 (SIS) and serine 67 contribute to the shikimate site. Lysine 71 (proton acceptor) is an active-site residue. Aspartate 83 contributes to the NADP(+) binding site. Residues asparagine 92 and aspartate 107 each contribute to the shikimate site. NADP(+)-binding positions include 132 to 136 (GGGGA) and valine 230. Residue tyrosine 232 participates in shikimate binding. Position 253 (glycine 253) interacts with NADP(+).

This sequence belongs to the shikimate dehydrogenase family. As to quaternary structure, homodimer.

It carries out the reaction shikimate + NADP(+) = 3-dehydroshikimate + NADPH + H(+). It participates in metabolic intermediate biosynthesis; chorismate biosynthesis; chorismate from D-erythrose 4-phosphate and phosphoenolpyruvate: step 4/7. Its function is as follows. Involved in the biosynthesis of the chorismate, which leads to the biosynthesis of aromatic amino acids. Catalyzes the reversible NADPH linked reduction of 3-dehydroshikimate (DHSA) to yield shikimate (SA). The protein is Shikimate dehydrogenase (NADP(+)) of Streptococcus suis (strain 98HAH33).